Reading from the N-terminus, the 472-residue chain is Adenosylhomocysteinase (472 aa).

Substrate-binding residues include threonine 64, aspartate 138, and glutamate 198. Threonine 199 to threonine 201 contributes to the NAD(+) binding site. Residues lysine 228 and aspartate 232 each contribute to the substrate site. NAD(+) is bound by residues asparagine 233, glycine 262–glycine 267, glutamate 285, asparagine 320, isoleucine 341–histidine 343, and asparagine 386.

The protein belongs to the adenosylhomocysteinase family. NAD(+) is required as a cofactor.

It localises to the cytoplasm. It carries out the reaction S-adenosyl-L-homocysteine + H2O = L-homocysteine + adenosine. It participates in amino-acid biosynthesis; L-homocysteine biosynthesis; L-homocysteine from S-adenosyl-L-homocysteine: step 1/1. Functionally, may play a key role in the regulation of the intracellular concentration of adenosylhomocysteine. This chain is Adenosylhomocysteinase, found in Prochlorococcus marinus (strain MIT 9215).